Consider the following 341-residue polypeptide: Ketol-acid reductoisomerase (NADP(+)) (341 aa).

The region spanning 1-182 (MATIYYDKDA…GCTRAGVLET (182 aa)) is the KARI N-terminal Rossmann domain. Residues 25-28 (YGSQ), S51, S53, and 83-86 (DQTQ) contribute to the NADP(+) site. The active site involves H108. G134 is an NADP(+) binding site. The KARI C-terminal knotted domain occupies 183-328 (TFKEETETDL…KRLRDMMSWI (146 aa)). Residues D191, E195, E227, and E231 each coordinate Mg(2+). S252 is a substrate binding site.

This sequence belongs to the ketol-acid reductoisomerase family. Requires Mg(2+) as cofactor.

It catalyses the reaction (2R)-2,3-dihydroxy-3-methylbutanoate + NADP(+) = (2S)-2-acetolactate + NADPH + H(+). It carries out the reaction (2R,3R)-2,3-dihydroxy-3-methylpentanoate + NADP(+) = (S)-2-ethyl-2-hydroxy-3-oxobutanoate + NADPH + H(+). It functions in the pathway amino-acid biosynthesis; L-isoleucine biosynthesis; L-isoleucine from 2-oxobutanoate: step 2/4. It participates in amino-acid biosynthesis; L-valine biosynthesis; L-valine from pyruvate: step 2/4. Involved in the biosynthesis of branched-chain amino acids (BCAA). Catalyzes an alkyl-migration followed by a ketol-acid reduction of (S)-2-acetolactate (S2AL) to yield (R)-2,3-dihydroxy-isovalerate. In the isomerase reaction, S2AL is rearranged via a Mg-dependent methyl migration to produce 3-hydroxy-3-methyl-2-ketobutyrate (HMKB). In the reductase reaction, this 2-ketoacid undergoes a metal-dependent reduction by NADPH to yield (R)-2,3-dihydroxy-isovalerate. The sequence is that of Ketol-acid reductoisomerase (NADP(+)) from Anaeromyxobacter sp. (strain K).